A 98-amino-acid polypeptide reads, in one-letter code: UPF0251 protein Sbal_3699 (98 aa).

It belongs to the UPF0251 family.

This Shewanella baltica (strain OS155 / ATCC BAA-1091) protein is UPF0251 protein Sbal_3699.